The primary structure comprises 270 residues: Protein ABHD14A (270 aa).

The helical; Signal-anchor for type II membrane protein transmembrane segment at 9-29 (LVVLGLVLLATVLLYLLLPSM) threads the bilayer. Residue Asn61 is glycosylated (N-linked (GlcNAc...) asparagine). Residues Ser170 and Asp221 each act as charge relay system in the active site. Asn237 carries N-linked (GlcNAc...) asparagine glycosylation. His248 acts as the Charge relay system in catalysis.

The protein belongs to the AB hydrolase superfamily. ABHD14 family.

Its subcellular location is the cytoplasm. The protein resides in the membrane. Its function is as follows. Possible role in granule neuron development. The polypeptide is Protein ABHD14A (Danio rerio (Zebrafish)).